Consider the following 184-residue polypeptide: ATP synthase subunit delta (184 aa).

This sequence belongs to the ATPase delta chain family. F-type ATPases have 2 components, F(1) - the catalytic core - and F(0) - the membrane proton channel. F(1) has five subunits: alpha(3), beta(3), gamma(1), delta(1), epsilon(1). F(0) has three main subunits: a(1), b(2) and c(10-14). The alpha and beta chains form an alternating ring which encloses part of the gamma chain. F(1) is attached to F(0) by a central stalk formed by the gamma and epsilon chains, while a peripheral stalk is formed by the delta and b chains.

It localises to the cell inner membrane. In terms of biological role, f(1)F(0) ATP synthase produces ATP from ADP in the presence of a proton or sodium gradient. F-type ATPases consist of two structural domains, F(1) containing the extramembraneous catalytic core and F(0) containing the membrane proton channel, linked together by a central stalk and a peripheral stalk. During catalysis, ATP synthesis in the catalytic domain of F(1) is coupled via a rotary mechanism of the central stalk subunits to proton translocation. This protein is part of the stalk that links CF(0) to CF(1). It either transmits conformational changes from CF(0) to CF(1) or is implicated in proton conduction. This chain is ATP synthase subunit delta, found in Rickettsia peacockii (strain Rustic).